A 226-amino-acid polypeptide reads, in one-letter code: Gap junction beta-2 protein (226 aa).

An intramembrane segment occupies D2–V13. Topologically, residues N14–I20 are cytoplasmic. The chain crosses the membrane as a helical span at residues G21 to A40. The Extracellular segment spans residues K41–H73. Residues E42, G45, and E47 each contribute to the Ca(2+) site. Intrachain disulfides connect C53–C180, C60–C174, and C64–C169. Residues I74 to H94 traverse the membrane as a helical segment. Residues V95–T135 lie on the Cytoplasmic side of the membrane. The chain crosses the membrane as a helical span at residues Y136–V156. The Extracellular segment spans residues M157–T189. A helical transmembrane segment spans residues V190–L210. Topologically, residues C211–V226 are cytoplasmic.

It belongs to the connexin family. Beta-type (group I) subfamily. As to quaternary structure, a hemichannel or connexon is composed of a hexamer of connexins. A functional gap junction is formed by the apposition of two hemichannels. Forms heteromeric channels with GJB4. Interacts with CNST.

The protein localises to the cell membrane. Its subcellular location is the cell junction. It is found in the gap junction. Structural component of gap junctions. Gap junctions are dodecameric channels that connect the cytoplasm of adjoining cells. They are formed by the docking of two hexameric hemichannels, one from each cell membrane. Small molecules and ions diffuse from one cell to a neighboring cell via the central pore. In Pongo pygmaeus (Bornean orangutan), this protein is Gap junction beta-2 protein (GJB2).